The chain runs to 681 residues: uncharacterized protein (681 aa).

The protein in the N-terminal section; belongs to the purine/pyrimidine phosphoribosyltransferase family.

This is an uncharacterized protein from Mycobacterium tuberculosis (strain CDC 1551 / Oshkosh).